The primary structure comprises 374 residues: Regulator of G-protein signaling 20 (374 aa).

Positions 1 to 11 (MPRLSQDNQQG) are enriched in polar residues. 2 disordered regions span residues 1 to 21 (MPRL…RPSR) and 135 to 158 (PPGG…PPMG). The span at 12 to 21 (HQKHFSRPSR) shows a compositional bias: basic residues. The 117-residue stretch at 248 to 364 (SFDKLMLTPA…MNSALYKDLL (117 aa)) folds into the RGS domain.

As to quaternary structure, forms a complex with G(alpha)z/i2 subunits and mu-opioid receptors; the formation of this complex results in mu-opioid receptor desensitization. Interacts with OPRM1. Fatty acylated. Heavily palmitoylated in the cysteine string motif. Post-translationally, N- and O-glycosylated in synapsomal membranes. In terms of processing, serine phosphorylated in synapsomal membranes. Sumoylated with SUMO1 and SUMO2 in synaptosomes. The sumoylated forms act as a scaffold for sequestering mu-opioid receptor-activated G(alpha) subunits. Retinal-specific. Expressed throughout the retina, including photoreceptors.

The protein resides in the membrane. Its subcellular location is the nucleus. It localises to the cytoplasm. Functionally, inhibits signal transduction by increasing the GTPase activity of G protein alpha subunits thereby driving them into their inactive GDP-bound form. Binds selectively to G(z)-alpha and G(alpha)-i2 subunits, accelerates their GTPase activity and regulates their signaling activities. The G(z)-alpha activity is inhibited by the phosphorylation and palmitoylation of the G-protein. Negatively regulates mu-opioid receptor-mediated activation of the G-proteins. In Bos taurus (Bovine), this protein is Regulator of G-protein signaling 20 (RGS20).